Consider the following 744-residue polypeptide: Leucine-rich repeat extensin-like protein 1 (744 aa).

The first 26 residues, 1–26, serve as a signal peptide directing secretion; that stretch reads MLFPPLRSLFLFTLLLSSVCFLQIKA. Residues asparagine 71 and asparagine 77 are each glycosylated (N-linked (GlcNAc...) asparagine). 9 LRR repeats span residues 122–145, 147–170, 171–194, 196–217, 219–240, 241–265, 266–289, 290–313, and 315–336; these read LSDL…TFNR, KLLY…VLSL, PSLK…LFDR, LDAI…MGNS, VSAL…IGQM, GKTL…IGNL, KKVT…VGNM, KSLE…ICQL, and NLEN…CAAS. An N-linked (GlcNAc...) asparagine glycan is attached at asparagine 253. Asparagine 318 and asparagine 344 each carry an N-linked (GlcNAc...) asparagine glycan. One copy of the LRR 10 repeat lies at 381-404; it reads FSPPPPTFKMSPEVRTLPPPIYVY. Positions 382–744 are contains the Ser-Pro(4) repeats; that stretch reads SPPPPTFKMS…ASPPPPPSYY (363 aa). Disordered regions lie at residues 408–445, 518–537, 555–576, and 658–744; these read PPPP…PPPP, VYSS…PESS, PSPV…VYYP, and PPPS…PSYY. Residues 430 to 439 show a composition bias toward low complexity; it reads SKMSPSVRAY. The span at 704 to 729 shows a compositional bias: pro residues; the sequence is YEPPPEYSYSSSPPPPSPTSYFPPMP.

Hydroxylated on proline residues in the S-P-P-P-P repeat. Post-translationally, O-glycosylated on hydroxyprolines. Expressed in root hair cells (at protein level).

It is found in the secreted. It localises to the cell wall. Functionally, modulates cell morphogenesis by regulating cell wall formation and assembly, and/or growth polarization. Together with LRX2, component of the extracellular mechanism regulating root hair morphogenesis and elongation. The polypeptide is Leucine-rich repeat extensin-like protein 1 (LRX1) (Arabidopsis thaliana (Mouse-ear cress)).